Consider the following 1944-residue polypeptide: Anaphase-promoting complex subunit 1 (1944 aa).

Residues serine 51 and serine 60 each carry the phosphoserine modification. Threonine 291 is subject to Phosphothreonine. The disordered stretch occupies residues 312 to 343 (ESPVASPFQNYSSIHSQSRSTSSPSLHSRSPS). Residues serine 313, serine 341, serine 343, serine 355, serine 362, serine 373, and serine 377 each carry the phosphoserine modification. Positions 323–343 (SSIHSQSRSTSSPSLHSRSPS) are enriched in low complexity. The interval 370–395 (NLSSHSQSPKRHSISHSPSGSFNDSF) is disordered. Residues 384–393 (SHSPSGSFND) are compositionally biased toward polar residues. Threonine 537 is subject to Phosphothreonine. Phosphoserine occurs at positions 547 and 555. The residue at position 571 (tyrosine 571) is a Phosphotyrosine. Phosphoserine occurs at positions 680, 686, and 688. Residues 991–1014 (NLPRGKSVLSSEVSSGTEAEEEDD) are disordered. A compositionally biased stretch (polar residues) spans 998–1007 (VLSSEVSSGT). PC repeat units lie at residues 1297-1325 (AAGL…PEQL), 1366-1404 (GATL…PEFL), 1467-1501 (GACL…YLSA), and 1520-1552 (LLSL…EMNY).

It belongs to the APC1 family. In terms of assembly, the mammalian APC/C is composed at least of 14 distinct subunits ANAPC1, ANAPC2, CDC27/APC3, ANAPC4, ANAPC5, CDC16/APC6, ANAPC7, CDC23/APC8, ANAPC10, ANAPC11, CDC26/APC12, ANAPC13, ANAPC15 and ANAPC16 that assemble into a complex of at least 19 chains with a combined molecular mass of around 1.2 MDa; APC/C interacts with FZR1 and FBXO5. In terms of processing, phosphorylated. Phosphorylation on Ser-355 occurs specifically during mitosis. Abundantly expressed in proliferating fibroblasts, juvenile testis, adult brain and epididymis.

Its pathway is protein modification; protein ubiquitination. In terms of biological role, component of the anaphase promoting complex/cyclosome (APC/C), a cell cycle-regulated E3 ubiquitin ligase that controls progression through mitosis and the G1 phase of the cell cycle. The APC/C complex acts by mediating ubiquitination and subsequent degradation of target proteins: it mainly mediates the formation of 'Lys-11'-linked polyubiquitin chains and, to a lower extent, the formation of 'Lys-48'- and 'Lys-63'-linked polyubiquitin chains. The APC/C complex catalyzes assembly of branched 'Lys-11'-/'Lys-48'-linked branched ubiquitin chains on target proteins. This Mus musculus (Mouse) protein is Anaphase-promoting complex subunit 1 (Anapc1).